Consider the following 1850-residue polypeptide: Voltage-dependent L-type calcium channel subunit alpha-1S (1850 aa).

A disordered region spans residues 1 to 23 (MEPSSPQDEGLRKKQPKKPVPEI). The Cytoplasmic segment spans residues 1-51 (MEPSSPQDEGLRKKQPKKPVPEILPRPPRALFCLTLQNPLRKACISVVEWK). Residues 38 to 337 (NPLRKACISV…LVLGVLSGEF (300 aa)) form an I repeat. The chain crosses the membrane as a helical span at residues 52–70 (PFETIILLTIFANCVALAV). At 71–85 (YLPMPEDDNNTLNLG) the chain is on the extracellular side. A helical transmembrane segment spans residues 86-106 (LEKLEYFFLIVFSIEAAMKII). Over 107 to 115 (AYGFLFHQD) the chain is Cytoplasmic. The helical transmembrane segment at 116 to 136 (AYLRSGWNVLDFIIVFLGVFT) threads the bilayer. The Extracellular segment spans residues 137–160 (AILEQVNIIQTNTAPMSSKGAGLD). Residues 161–179 (VKALRAFRVLRPLRLVSGV) traverse the membrane as a helical segment. The Cytoplasmic portion of the chain corresponds to 180–196 (PSLQVVLNSIFKAMLPL). Residues 197–218 (FHIALLVLFMVIIYAIIGLELF) form a helical membrane-spanning segment. At 219–279 (KGKMHKTCYF…HGITHFDNFG (61 aa)) the chain is on the extracellular side. 2 disulfides stabilise this stretch: Cys226-Cys254 and Cys245-Cys261. The pore-forming intramembrane region spans 280–301 (FSMLTVYQCISMEGWTDVLYWV). A Selectivity filter of repeat I motif is present at residues 290-293 (SMEG). Glu292 contributes to the Ca(2+) binding site. At 302-309 (NDAIGNEW) the chain is on the extracellular side. The chain crosses the membrane as a helical span at residues 310-330 (PWIYFVTLILLGSFFILNLVL). The Cytoplasmic segment spans residues 331-432 (GVLSGEFTKE…WKCHDLVKSK (102 aa)). The binding to the beta subunit stretch occupies residues 357–374 (QQLEEDLRGYMSWITQGE). Phosphoserine occurs at positions 393 and 397. The II repeat unit spans residues 418–664 (NRVFRWKCHD…VFLAIAVDNL (247 aa)). A helical transmembrane segment spans residues 433–451 (VFYWLVILIVALNTLSIAS). Topologically, residues 452 to 462 (EHHNQPLWLTH) are extracellular. A helical transmembrane segment spans residues 463–483 (LQDVANRVLLALFTIEMLMKM). The Cytoplasmic portion of the chain corresponds to 484 to 494 (YGLGLRQYFMS). The chain crosses the membrane as a helical span at residues 495-514 (IFNRFDCFVVCSGILEILLV). The Extracellular portion of the chain corresponds to 515–523 (ESGAMTPLG). A helical membrane pass occupies residues 524–542 (ISVLRCIRLLRLFKITKYW). At 543 to 561 (TSLSNLVASLLNSIRSIAS) the chain is on the cytoplasmic side. Residues 562–581 (LLLLLFLFMIIFALLGMQLF) traverse the membrane as a helical segment. The Extracellular portion of the chain corresponds to 582-601 (GGRYDFEDTEVRRSNFDNFP). Residues 602 to 623 (QALISVFQVLTGEDWNSVMYNG) constitute an intramembrane region (pore-forming). Residues 612 to 615 (TGED) carry the Selectivity filter of repeat II motif. Ca(2+) is bound at residue Glu614. The Extracellular portion of the chain corresponds to 624-633 (IMAYGGPSYP). The chain crosses the membrane as a helical span at residues 634 to 653 (GVLVCIYFIILFVCGNYILL). The Cytoplasmic segment spans residues 654–799 (NVFLAIAVDN…VLCHRIVNAT (146 aa)). 2 disordered regions span residues 673-717 (AQKA…IPTT) and 731-758 (EVKD…SPRP). A Phosphoserine; by PKA modification is found at Ser687. The segment covering 690-711 (LPDKSEEERSTMTKKLEQKPKG) has biased composition (basic and acidic residues). Residues 742–751 (PGDDEEDEPE) show a composition bias toward acidic residues. The III repeat unit spans residues 786–1068 (NKIRVLCHRI…IFVGFVIVTF (283 aa)). A helical membrane pass occupies residues 800 to 818 (WFTNFILLFILLSSAALAA). The Extracellular segment spans residues 819–830 (EDPIRADSMRNQ). Residues 831 to 850 (ILEYFDYVFTAVFTVEIVLK) traverse the membrane as a helical segment. At 851–866 (MTTYGAFLHKGSFCRN) the chain is on the cytoplasmic side. The chain crosses the membrane as a helical span at residues 867–885 (YFNILDLLVVAVSLISMGL). Over 886–892 (ESSAISV) the chain is Extracellular. Residues 893–911 (VKILRVLRVLRPLRAINRA) traverse the membrane as a helical segment. Topologically, residues 912–930 (KGLKHVVQCVFVAIRTIGN) are cytoplasmic. The chain crosses the membrane as a helical span at residues 931 to 950 (IVLVTTLLQFMFACIGVQLF). Topologically, residues 951 to 1000 (KGKFYSCNDLSKMTEEECRGYYYIYKDGDPTQIELRPRQWIHNDFHFDNV) are extracellular. Cys957 and Cys968 form a disulfide bridge. The interval 988 to 1077 (RQWIHNDFHF…FQEQGETEYK (90 aa)) is dihydropyridine binding. An intramembrane region (pore-forming) is located at residues 1001 to 1021 (LSAMMSLFTVSTFEGWPQLLY). A Selectivity filter of repeat III motif is present at residues 1012–1015 (TFEG). Residue Glu1014 coordinates Ca(2+). Over 1022–1038 (KAIDSNEEDTGPVYNNR) the chain is Extracellular. The chain crosses the membrane as a helical span at residues 1039–1060 (VEMAIFFIIYIILIAFFMMNIF). Topologically, residues 1061-1118 (VGFVIVTFQEQGETEYKNCELDKNQRQCVQYALKARPLRCYIPKNPYQYQVWYVVTSS) are cytoplasmic. Residues 1105–1384 (NPYQYQVWYV…LFVAVIMDNF (280 aa)) form an IV repeat. Residues 1119–1140 (YFEYLMFALIMLNTICLGMQHY) traverse the membrane as a helical segment. The N-linked (GlcNAc...) asparagine glycan is linked to Asn1141. Topologically, residues 1141–1148 (NQSEQMNH) are extracellular. Residues 1149–1170 (ISDILNVAFTIIFTLEMILKLI) traverse the membrane as a helical segment. At 1171–1180 (AFKPRGYFGD) the chain is on the cytoplasmic side. Residues 1181 to 1200 (PWNVFDFLIVIGSIIDVILS) form a helical membrane-spanning segment. Over 1201-1231 (EIDTLLASSGGLYCLGGGCGNVDPDESARIS) the chain is Extracellular. The helical transmembrane segment at 1232-1250 (SAFFRLFRVMRLIKLLSRA) threads the bilayer. Residues 1251–1268 (EGVRTLLWTFIKSFQALP) are Cytoplasmic-facing. The chain crosses the membrane as a helical span at residues 1269-1289 (YVALLIVMLFFIYAVIGMQMF). At 1290-1311 (GKIAMVDGTQINRNNNFQTFPQ) the chain is on the extracellular side. The segment at residues 1312-1330 (AVLLLFRCATGEAWQEILL) is an intramembrane region (pore-forming). The Selectivity filter of repeat IV motif lies at 1321–1324 (TGEA). Residues 1331-1356 (ACSYGKRCDPESDYAPGEEYACGTNF) lie on the Extracellular side of the membrane. Residues 1337-1403 (RCDPESDYAP…LGPHHLDEFK (67 aa)) form a dihydropyridine binding region. Residues Cys1338 and Cys1352 are joined by a disulfide bond. A phenylalkylamine binding region spans residues 1349-1391 (EYACGTNFAYYYFISFYMLCAFLIINLFVAVIMDNFDYLTRDW). Residues 1357–1381 (AYYYFISFYMLCAFLIINLFVAVIM) traverse the membrane as a helical segment. Topologically, residues 1382–1850 (DNFDYLTRDW…PKGGAMPREP (469 aa)) are cytoplasmic. Positions 1522 to 1542 (KFYATFLIQEHFRKFMKRQEE) are interaction with calmodulin. At Ser1575 the chain carries Phosphoserine; by PKA and CAMK2. Thr1579 bears the Phosphothreonine mark. Position 1617 is a phosphoserine; by PKA (Ser1617). The interval 1697–1779 (PVTREGPFSQ…FEERVPRNSA (83 aa)) is disordered. A compositionally biased stretch (polar residues) spans 1706-1716 (QPCSVSGVNSR). 2 stretches are compositionally biased toward basic and acidic residues: residues 1717–1726 (SHVDKLERQM) and 1745–1756 (QEKHPVHEEGKG).

It belongs to the calcium channel alpha-1 subunit (TC 1.A.1.11) family. CACNA1S subfamily. In terms of assembly, component of a calcium channel complex consisting of a pore-forming alpha subunit (CACNA1S) and the ancillary subunits CACNB1 or CACNB2, CACNG1 and CACNA2D1. The channel complex contains alpha, beta, gamma and delta subunits in a 1:1:1:1 ratio, i.e. it contains either CACNB1 or CACNB2. CACNA1S channel activity is modulated by the auxiliary subunits (CACNB1 or CACNB2, CACNG1 and CACNA2D1). Interacts with DYSF and JSRP1. Interacts with RYR1. Interacts with STAC, STAC2 and STAC3 (via their SH3 domains). Interacts with CALM. The alpha-1S subunit is found in two isoforms in the skeletal muscle: a minor form of 212 kDa containing the complete amino acid sequence, and a major form of 190 kDa derived from the full-length form by post-translational proteolysis close to Phe-1690. Post-translationally, phosphorylated. Phosphorylation by PKA activates the calcium channel. Both the minor and major forms are phosphorylated in vitro by PKA. Phosphorylation at Ser-1575 is involved in beta-adrenergic-mediated regulation of the channel. Skeletal muscle specific.

It localises to the cell membrane. The protein localises to the sarcolemma. The protein resides in the T-tubule. It catalyses the reaction Ca(2+)(in) = Ca(2+)(out). Its activity is regulated as follows. Channel activity is blocked by dihydropyridines (DHP), phenylalkylamines, and by benzothiazepines. Pore-forming, alpha-1S subunit of the voltage-gated calcium channel that gives rise to L-type calcium currents in skeletal muscle. Calcium channels containing the alpha-1S subunit play an important role in excitation-contraction coupling in skeletal muscle via their interaction with RYR1, which triggers Ca(2+) release from the sarcplasmic reticulum and ultimately results in muscle contraction. Long-lasting (L-type) calcium channels belong to the 'high-voltage activated' (HVA) group. This chain is Voltage-dependent L-type calcium channel subunit alpha-1S (Cacna1s), found in Rattus norvegicus (Rat).